Here is a 192-residue protein sequence, read N- to C-terminus: Ras-like GTP-binding protein O-RHO (192 aa).

12–19 (GDGACGKT) lines the GTP pocket. The Effector region signature appears at 34–42 (YVPTVFENY). GTP-binding positions include 59–63 (DTAGQ) and 117–120 (NKKT). Residue C189 is modified to Cysteine methyl ester. A lipid anchor (S-geranylgeranyl cysteine) is attached at C189. Positions 190-192 (LLL) are cleaved as a propeptide — removed in mature form.

This sequence belongs to the small GTPase superfamily. Rho family.

Its subcellular location is the cell membrane. The sequence is that of Ras-like GTP-binding protein O-RHO from Diplobatis ommata (Ocellated electric ray).